The sequence spans 363 residues: Protein-glutamate methylesterase/protein-glutamine glutaminase 2 (363 aa).

The Response regulatory domain maps to 6–123 (RVLIVDDSAS…AQFLLESKIH (118 aa)). A 4-aspartylphosphate modification is found at D57. In terms of domain architecture, CheB-type methylesterase spans 172–363 (ARTTESVICI…AMEILRAGNR (192 aa)). Catalysis depends on residues S184, H210, and D306.

The protein belongs to the CheB family. In terms of processing, phosphorylated by CheA. Phosphorylation of the N-terminal regulatory domain activates the methylesterase activity.

The protein localises to the cytoplasm. The catalysed reaction is [protein]-L-glutamate 5-O-methyl ester + H2O = L-glutamyl-[protein] + methanol + H(+). It catalyses the reaction L-glutaminyl-[protein] + H2O = L-glutamyl-[protein] + NH4(+). Its function is as follows. Involved in chemotaxis. Part of a chemotaxis signal transduction system that modulates chemotaxis in response to various stimuli. Catalyzes the demethylation of specific methylglutamate residues introduced into the chemoreceptors (methyl-accepting chemotaxis proteins or MCP) by CheR. Also mediates the irreversible deamidation of specific glutamine residues to glutamic acid. In Rhodospirillum rubrum (strain ATCC 11170 / ATH 1.1.1 / DSM 467 / LMG 4362 / NCIMB 8255 / S1), this protein is Protein-glutamate methylesterase/protein-glutamine glutaminase 2.